The following is a 295-amino-acid chain: Glucose-1-phosphate thymidylyltransferase (295 aa).

Mg(2+) is bound by residues Asp-111 and Asp-226.

The protein belongs to the glucose-1-phosphate thymidylyltransferase family. Homotetramer. The cofactor is Mg(2+).

It carries out the reaction dTTP + alpha-D-glucose 1-phosphate + H(+) = dTDP-alpha-D-glucose + diphosphate. The protein operates within carbohydrate biosynthesis; dTDP-L-rhamnose biosynthesis. It participates in bacterial outer membrane biogenesis; LPS O-antigen biosynthesis. Catalyzes the formation of dTDP-glucose, from dTTP and glucose 1-phosphate, as well as its pyrophosphorolysis. This Xanthomonas campestris pv. campestris (strain B100) protein is Glucose-1-phosphate thymidylyltransferase (rmlA).